The primary structure comprises 310 residues: Putative HTH-type transcriptional regulatory protein M1425_1284 (310 aa).

The region spanning 125–180 (LKHKREEMGYSIGDVAKFLGVSRKAIYDYEKGDSDVSLEVAEKLIDLFGDDIIGDV) is the HTH cro/C1-type domain. A DNA-binding region (H-T-H motif) is located at residues 136-155 (IGDVAKFLGVSRKAIYDYEK).

The polypeptide is Putative HTH-type transcriptional regulatory protein M1425_1284 (Saccharolobus islandicus (strain M.14.25 / Kamchatka #1) (Sulfolobus islandicus)).